The sequence spans 369 residues: Phospho-N-acetylmuramoyl-pentapeptide-transferase (369 aa).

The next 10 membrane-spanning stretches (helical) occupy residues 3-23, 53-73, 81-101, 118-138, 162-182, 198-218, 240-260, 267-287, 290-310, and 347-367; these read ALLFAGAFSLAFTLFLTPLFI, GGIVIILASVLGYFVGHLLTW, VTPSGLLVVFMMVGLGFVGFL, WQKIAGQVVVATVFAVLAITL, FMALGAVIGTGLFIVWICLIV, LAAGASIFSIGSYVIIGFWQF, PLDLAIIAASIVGALIGFLWW, IFMGDTGSLGLGGALAALAIL, TELLLVFIGGLFVIVAGSVVL, and FWIIAGLLVAAGVGTFYLEWI.

It belongs to the glycosyltransferase 4 family. MraY subfamily. Mg(2+) serves as cofactor.

It is found in the cell membrane. The enzyme catalyses UDP-N-acetyl-alpha-D-muramoyl-L-alanyl-gamma-D-glutamyl-meso-2,6-diaminopimeloyl-D-alanyl-D-alanine + di-trans,octa-cis-undecaprenyl phosphate = di-trans,octa-cis-undecaprenyl diphospho-N-acetyl-alpha-D-muramoyl-L-alanyl-D-glutamyl-meso-2,6-diaminopimeloyl-D-alanyl-D-alanine + UMP. It functions in the pathway cell wall biogenesis; peptidoglycan biosynthesis. Functionally, catalyzes the initial step of the lipid cycle reactions in the biosynthesis of the cell wall peptidoglycan: transfers peptidoglycan precursor phospho-MurNAc-pentapeptide from UDP-MurNAc-pentapeptide onto the lipid carrier undecaprenyl phosphate, yielding undecaprenyl-pyrophosphoryl-MurNAc-pentapeptide, known as lipid I. The protein is Phospho-N-acetylmuramoyl-pentapeptide-transferase of Clavibacter michiganensis subsp. michiganensis (strain NCPPB 382).